A 421-amino-acid polypeptide reads, in one-letter code: UPF0300 protein C737.04 (421 aa).

It belongs to the UPF0300 family.

Its subcellular location is the cytoplasm. This is UPF0300 protein C737.04 from Schizosaccharomyces pombe (strain 972 / ATCC 24843) (Fission yeast).